The sequence spans 172 residues: Protein YdeJ (172 aa).

This sequence belongs to the CinA family.

Functionally, does not have nicotinamide-nucleotide (NMN) amidohydrolase activity. The polypeptide is Protein YdeJ (ydeJ) (Escherichia coli (strain K12)).